The following is a 251-amino-acid chain: E3 ubiquitin-protein ligase MARCHF3 (251 aa).

Residues 61–121 (QSFNDRPMCR…ELCHFRFSVE (61 aa)) form an RING-CH-type zinc finger. Zn(2+) is bound by residues cysteine 69, cysteine 72, cysteine 85, cysteine 87, histidine 95, cysteine 98, cysteine 111, and cysteine 114. The next 2 membrane-spanning stretches (helical) occupy residues 143–163 (LFGD…SGWL) and 180–200 (AVGL…WTLV).

Its subcellular location is the cytoplasmic vesicle membrane. It localises to the early endosome membrane. It catalyses the reaction S-ubiquitinyl-[E2 ubiquitin-conjugating enzyme]-L-cysteine + [acceptor protein]-L-lysine = [E2 ubiquitin-conjugating enzyme]-L-cysteine + N(6)-ubiquitinyl-[acceptor protein]-L-lysine.. Its pathway is protein modification; protein ubiquitination. In terms of biological role, E3 ubiquitin-protein ligase which may be involved in endosomal trafficking. E3 ubiquitin ligases accept ubiquitin from an E2 ubiquitin-conjugating enzyme in the form of a thioester and then directly transfer the ubiquitin to targeted substrates. The chain is E3 ubiquitin-protein ligase MARCHF3 (marchf3) from Xenopus tropicalis (Western clawed frog).